Consider the following 520-residue polypeptide: Pleckstrin homology domain-containing family A member 8 (520 aa).

Positions Met1–Ala93 constitute a PH domain. Position 139 is a phosphothreonine (Thr139). Ser145 carries the phosphoserine modification. A Phosphothreonine modification is found at Thr153. Positions Gly275–Asp285 are enriched in basic and acidic residues. Positions Gly275–Asp305 are disordered. The segment at Thr311–Val520 is glycolipid transfer protein homology domain.

Homodimer. Interacts with ARF1; the interaction together with phosphatidylinositol 4-phosphate binding is required for FAPP2 GlcCer transfer ability.

It localises to the cytoplasm. The protein localises to the golgi apparatus. It is found in the trans-Golgi network membrane. Its subcellular location is the membrane. Functionally, cargo transport protein that is required for apical transport from the trans-Golgi network (TGN). Transports AQP2 from the trans-Golgi network (TGN) to sites of AQP2 phosphorylation. Mediates the non-vesicular transport of glucosylceramide (GlcCer) from the trans-Golgi network (TGN) to the plasma membrane and plays a pivotal role in the synthesis of complex glycosphingolipids. Binding of both phosphatidylinositol 4-phosphate (PIP) and ARF1 are essential for the GlcCer transfer ability. Also required for primary cilium formation, possibly by being involved in the transport of raft lipids to the apical membrane, and for membrane tubulation. This chain is Pleckstrin homology domain-containing family A member 8 (PLEKHA8), found in Bos taurus (Bovine).